The primary structure comprises 233 residues: Membrane steroid-binding protein 2 (233 aa).

Residues Ala23 to Val43 form a helical membrane-spanning segment. One can recognise a Cytochrome b5 heme-binding domain in the interval Glu70–Gln167. The segment at Glu70–Gln167 is steroid-binding. Composition is skewed to basic and acidic residues over residues Lys169 to Glu181 and Thr202 to Ala224. The disordered stretch occupies residues Lys169–Glu233. Thr225 carries the phosphothreonine modification.

Belongs to the cytochrome b5 family. MAPR subfamily.

The protein resides in the cell membrane. The sequence is that of Membrane steroid-binding protein 2 (MSBP2) from Arabidopsis thaliana (Mouse-ear cress).